Consider the following 334-residue polypeptide: Adenosine deaminase (334 aa).

Residues histidine 12 and histidine 14 each coordinate Zn(2+). Histidine 14, aspartate 16, and glycine 170 together coordinate substrate. Histidine 197 is a Zn(2+) binding site. Glutamate 200 acts as the Proton donor in catalysis. Aspartate 278 provides a ligand contact to Zn(2+). Aspartate 279 contributes to the substrate binding site.

This sequence belongs to the metallo-dependent hydrolases superfamily. Adenosine and AMP deaminases family. Adenosine deaminase subfamily. Zn(2+) serves as cofactor.

The enzyme catalyses adenosine + H2O + H(+) = inosine + NH4(+). It carries out the reaction 2'-deoxyadenosine + H2O + H(+) = 2'-deoxyinosine + NH4(+). Its function is as follows. Catalyzes the hydrolytic deamination of adenosine and 2-deoxyadenosine. The protein is Adenosine deaminase of Yersinia pseudotuberculosis serotype IB (strain PB1/+).